A 617-amino-acid chain; its full sequence is Vacuolar protein sorting-associated protein 33B (617 aa).

The residue at position 2 (alanine 2) is an N-acetylalanine.

Belongs to the STXBP/unc-18/SEC1 family. Interacts with RAB11A and VIPAS39. Interacts with RAB25. Associates with adapter protein complex 3 (AP-3), clathrin:AP-3 and clathrin:HGS complexes. In terms of assembly, (Microbial infection) Interacts with M.tuberculosis PtpA. Post-translationally, phosphorylated on tyrosine residues. (Microbial infection) Dephosphorylated by M.tuberculosis PtpA, which induces the reduction of host phagolysosome fusion in M.tuberculosis-infected macrophages. In terms of tissue distribution, ubiquitous; highly expressed in testis and low expression in the lung.

The protein resides in the late endosome membrane. It localises to the lysosome membrane. The protein localises to the early endosome. Its subcellular location is the cytoplasmic vesicle. It is found in the clathrin-coated vesicle. The protein resides in the recycling endosome. Its function is as follows. May play a role in vesicle-mediated protein trafficking to lysosomal compartments and in membrane docking/fusion reactions of late endosomes/lysosomes. Required for proper trafficking and targeting of the collagen-modifying enzyme lysyl hydroxylase 3 (LH3) to intracellular collagen. Mediates phagolysosomal fusion in macrophages. Proposed to be involved in endosomal maturation implicating VIPAS39. In epithelial cells, the VPS33B:VIPAS39 complex may play a role in the apical recycling pathway and in the maintenance of the apical-basolateral polarity. Seems to be involved in the sorting of specific cargos from the trans-Golgi network to alpha-granule-destined multivesicular bodies (MVBs) promoting MVBs maturation in megakaryocytes. The sequence is that of Vacuolar protein sorting-associated protein 33B (VPS33B) from Homo sapiens (Human).